We begin with the raw amino-acid sequence, 171 residues long: uncharacterized protein (171 aa).

The first 18 residues, 1–18, serve as a signal peptide directing secretion; the sequence is MRYSKLTMLIPCALLLSA. A lipid anchor (N-palmitoyl cysteine) is attached at C19. C19 carries S-diacylglycerol cysteine lipidation.

It localises to the cell membrane. This is an uncharacterized protein from Escherichia coli (strain K12).